Reading from the N-terminus, the 495-residue chain is WD repeat-containing protein 37 (495 aa).

Polar residues-rich tracts occupy residues 1–13 (MPTESASCSTARQ) and 22–31 (SLSIRRTNSS). A disordered region spans residues 1 to 50 (MPTESASCSTARQTKQKRKSHSLSIRRTNSSEQERTGLPRDMLEGQDSKL). The segment covering 32-47 (EQERTGLPRDMLEGQD) has biased composition (basic and acidic residues). WD repeat units lie at residues 154–194 (GHRD…CLVK) and 197–236 (GHVGSVNSIKFHPSEQLALTASGDQTAHIWRYAVQLPTPQ). The tract at residues 237–266 (PVADTSQISGEDEVECSDKDEPDLDGDVSS) is disordered. Residues 246–264 (GEDEVECSDKDEPDLDGDV) show a composition bias toward acidic residues. 5 WD repeats span residues 280–319 (SHQGVVIAADWLVGGKQAVTASWDRTANLYDVETSELVHS), 322–361 (GHDQELTHCCTHPTQRLVVTSSRDTTFRLWDFRDPSIHSV), 366–404 (GHTDTVTSAVFTVGDNVVSGSDDRTVKVWDLKNMRSPIA), 407–446 (RTDSAINRINVCVGQKIIALPHDNRQVRLFDMSGVRLARL), and 453–494 (GHRR…LLQE).

Forms homodimers. Interacts with PACS1. Interacts with PACS2.

It is found in the cytoplasm. It localises to the nucleus. Functionally, required for normal ER Ca2+ handling in lymphocytes. Together with PACS1, it plays an essential role in stabilizing peripheral lymphocyte populations. This Pongo abelii (Sumatran orangutan) protein is WD repeat-containing protein 37 (WDR37).